A 99-amino-acid chain; its full sequence is PE family protein PE13 (99 aa).

The region spanning 1–93 is the PE domain; that stretch reads MSFVMAYPEM…ASSYAATEVA (93 aa).

It belongs to the mycobacterial PE family.

It is found in the secreted. Its subcellular location is the cell wall. Functionally, may play a pivotal role in the interaction between M.tuberculosis and host. Can enhance the survival within macrophages under stress conditions such as H(2)O(2), SDS and low pH. Increases the production of IL-6 and IL-1beta from macrophages, and decreases the secretion of suppressor of cytokine signaling 3 (SOCS-3). These changes probably involve the p38-ERK-NF-kappa-B signaling pathway. Also precipitates the macrophage death. The chain is PE family protein PE13 from Mycobacterium tuberculosis (strain ATCC 25618 / H37Rv).